Here is a 169-residue protein sequence, read N- to C-terminus: Ribosome maturation factor RimM (169 aa).

Positions 96 to 166 constitute a PRC barrel domain; it reads EDEFYFADLI…AVVVRPVEVE (71 aa).

The protein belongs to the RimM family. Binds ribosomal protein uS19.

Its subcellular location is the cytoplasm. In terms of biological role, an accessory protein needed during the final step in the assembly of 30S ribosomal subunit, possibly for assembly of the head region. Essential for efficient processing of 16S rRNA. May be needed both before and after RbfA during the maturation of 16S rRNA. It has affinity for free ribosomal 30S subunits but not for 70S ribosomes. This Acidiphilium cryptum (strain JF-5) protein is Ribosome maturation factor RimM.